We begin with the raw amino-acid sequence, 463 residues long: Asparagine--tRNA ligase (463 aa).

Belongs to the class-II aminoacyl-tRNA synthetase family. In terms of assembly, homodimer.

It is found in the cytoplasm. The catalysed reaction is tRNA(Asn) + L-asparagine + ATP = L-asparaginyl-tRNA(Asn) + AMP + diphosphate + H(+). This is Asparagine--tRNA ligase from Bacillus cereus (strain ATCC 10987 / NRS 248).